Here is a 742-residue protein sequence, read N- to C-terminus: MATKYPKFSRDLAQDPTTRRIWYAIATGNDFESHDGITEENLYQKIFATHFGHVAIIFLWASSLLFHVAWQGNFEQWIKDPLHIRPIAHAIWDPHFGEPAIEAFSQGGANYPVNIAYSGVYHWWYTIGMRTNNDLYQGSIFLLLLAALFLFAGWLHLQPKFRPSLTWFKSAEPRLNHHLAGLFGVSSLAWAGHLIHVAIPESRGVHVGWRNFLTTLPHPAGLTPFWMGNWGVYAENADTTGHIFGTSQGAGTAILTFLGGFHPQTESLWLTDMAHHHLAIAVIFIIAGHMYRTNFGIGHSIKEMLNARQFFGIRTEGQFNLPHQGLYDTYNNSLHFQLSIHLAALGTALSLVAQHMYSLPPYAFIAKDFTTQAALYTHHQYIAGFLMVGAFAHAGIFWVRDYDPEQNQGNVLDRVLKHKEAIISHLSWVSLFLGFHTLGLYVHNDVVVAFGTPEKQILIEPVFAQFIQAAHGKLLYGMDTLLSNPDSIAYTAWPNHANVWLPNWLEAINSGTNSLFLTIGPGDFLVHHAIALGLHTTTLICVKGALDARGTKLMPDKKDFGFTFPCDGPGRGGTCQTSSWEQSFYLALFWMLNLLGWVTFYWHWKHLGVWQGNVAQFNENSTYLMGWFRDYLWANSAQLINGYNPYGTNNLSVWAWMFLFGHLVWATGFMFLISWRGYWQELIETLVWAHERTPLANLVRWKDKPVALSIVQGWLVGLAHFTVGYILTYAAFLIASTAGKFG.

8 helical membrane passes run 46-69 (IFAT…FHVA), 135-158 (LYQG…LHLQ), 175-199 (LNHH…HVAI), 273-291 (MAHH…GHMY), 334-357 (LHFQ…QHMY), 373-399 (AALY…IFWV), 421-443 (AIIS…LYVH), and 524-542 (FLVH…LICV). The [4Fe-4S] cluster site is built by Cys566 and Cys575. 2 helical membrane passes run 583 to 604 (SFYL…YWHW) and 651 to 673 (LSVW…MFLI). Residues His662, Met670, and Tyr678 each coordinate chlorophyll a. Trp679 is a binding site for phylloquinone. Residues 715–735 (LVGLAHFTVGYILTYAAFLIA) form a helical membrane-spanning segment.

Belongs to the PsaA/PsaB family. In terms of assembly, the PsaA/B heterodimer binds the P700 chlorophyll special pair and subsequent electron acceptors. PSI consists of a core antenna complex that captures photons, and an electron transfer chain that converts photonic excitation into a charge separation. The cyanobacterial PSI reaction center is composed of one copy each of PsaA,B,C,D,E,F,I,J,K,L,M and X, and forms trimeric complexes. The cofactor is PSI electron transfer chain: 5 chlorophyll a, 1 chlorophyll a', 2 phylloquinones and 3 4Fe-4S clusters. PSI core antenna: 90 chlorophyll a, 22 carotenoids, 3 phospholipids and 1 galactolipid. P700 is a chlorophyll a/chlorophyll a' dimer, A0 is one or more chlorophyll a, A1 is one or both phylloquinones and FX is a shared 4Fe-4S iron-sulfur center..

The protein resides in the cellular thylakoid membrane. The enzyme catalyses reduced [plastocyanin] + hnu + oxidized [2Fe-2S]-[ferredoxin] = oxidized [plastocyanin] + reduced [2Fe-2S]-[ferredoxin]. Its function is as follows. PsaA and PsaB bind P700, the primary electron donor of photosystem I (PSI), as well as the electron acceptors A0, A1 and FX. PSI is a plastocyanin/cytochrome c6-ferredoxin oxidoreductase, converting photonic excitation into a charge separation, which transfers an electron from the donor P700 chlorophyll pair to the spectroscopically characterized acceptors A0, A1, FX, FA and FB in turn. Oxidized P700 is reduced on the lumenal side of the thylakoid membrane by plastocyanin or cytochrome c6. This Trichormus variabilis (strain ATCC 29413 / PCC 7937) (Anabaena variabilis) protein is Photosystem I P700 chlorophyll a apoprotein A2 2.